The sequence spans 323 residues: Mycothiol acetyltransferase (323 aa).

Residue E44 coordinates 1D-myo-inositol 2-(L-cysteinylamino)-2-deoxy-alpha-D-glucopyranoside. L98–V100 provides a ligand contact to acetyl-CoA. The N-acetyltransferase domain maps to V173 to G323. 3 residues coordinate 1D-myo-inositol 2-(L-cysteinylamino)-2-deoxy-alpha-D-glucopyranoside: E200, K240, and E253. Residues V257–V259 and Q264–K270 each bind acetyl-CoA. Residue Y291 coordinates 1D-myo-inositol 2-(L-cysteinylamino)-2-deoxy-alpha-D-glucopyranoside.

This sequence belongs to the acetyltransferase family. MshD subfamily. In terms of assembly, monomer.

The enzyme catalyses 1D-myo-inositol 2-(L-cysteinylamino)-2-deoxy-alpha-D-glucopyranoside + acetyl-CoA = mycothiol + CoA + H(+). Catalyzes the transfer of acetyl from acetyl-CoA to desacetylmycothiol (Cys-GlcN-Ins) to form mycothiol. This Arthrobacter sp. (strain FB24) protein is Mycothiol acetyltransferase.